The chain runs to 144 residues: Thyrostimulin alpha-2 subunit (144 aa).

The signal sequence occupies residues 1–41 (MGRRDSGRAVAQRYRGVTRGVTVIACLMVVCACVGLCDATG). 4 disulfide bridges follow: Cys-52–Cys-107, Cys-66–Cys-121, Cys-76–Cys-136, and Cys-80–Cys-138.

It belongs to the glycoprotein hormones subunit alpha family. Heterodimer with GPHB5; non-covalently-linked. Expressed by the venom duct.

It localises to the secreted. This chain is Thyrostimulin alpha-2 subunit, found in Conus victoriae (Queen Victoria cone).